The following is a 120-amino-acid chain: NAD(P)H-quinone oxidoreductase subunit 3, chloroplastic (120 aa).

3 helical membrane-spanning segments follow: residues 9–29 (IFWAFLLISSAIPVLAFLISG), 64–84 (MFALVFVVFDVETVFLYPWAM), and 88–108 (VLGVSAFIEAFIFVLILILGL).

It belongs to the complex I subunit 3 family. In terms of assembly, NDH is composed of at least 16 different subunits, 5 of which are encoded in the nucleus.

It is found in the plastid. The protein localises to the chloroplast thylakoid membrane. It carries out the reaction a plastoquinone + NADH + (n+1) H(+)(in) = a plastoquinol + NAD(+) + n H(+)(out). It catalyses the reaction a plastoquinone + NADPH + (n+1) H(+)(in) = a plastoquinol + NADP(+) + n H(+)(out). NDH shuttles electrons from NAD(P)H:plastoquinone, via FMN and iron-sulfur (Fe-S) centers, to quinones in the photosynthetic chain and possibly in a chloroplast respiratory chain. The immediate electron acceptor for the enzyme in this species is believed to be plastoquinone. Couples the redox reaction to proton translocation, and thus conserves the redox energy in a proton gradient. This is NAD(P)H-quinone oxidoreductase subunit 3, chloroplastic from Arabidopsis thaliana (Mouse-ear cress).